We begin with the raw amino-acid sequence, 71 residues long: Pro-MCH (71 aa).

The signal sequence occupies residues 1-20; it reads AKMSLSSYILILTLVLFSQG.

Belongs to the melanin-concentrating hormone family.

It localises to the secreted. The sequence is that of Pro-MCH (PMCH) from Carlito syrichta (Philippine tarsier).